The sequence spans 438 residues: MQSDELQIPPWESLAEGLGFSNADEEYWWTVFGQPLNKLMDWADYSTSEKYRVLAFIHRYVIPTCGPRPKPNGDQYWDTFMGFDHTPIQVSINFYNSKATVRTGNIPISEASGTTEDPINQKASLDTIASQRHLVPGHNLRLFKHFTDAFFIPNEEANILNAELENRTIAMQAVQCMLSYDFPYRQIQTKVAICPMWKSMQVKRPMGDLMISSIKDLGIDAADYMKSLKVIEDFINSEKAVQSGAYAIFFAFDTMLTDDYQRTRVKIYFATQSTAFNNMVDIFTLGGRLDGPEMQRATKELRKLWMSTMAIPDGLRDDETLPKSPLPCAGVIFNFEIWPGADKPNPKIYLPCAYYGKDDLDIADGMDSFFKDQGWSKSFHSYKDNYIKAFVKDGKVMCRHHDISFSYKGQGAYITAYYKPELSEYADPSVWAPKLFKA.

80 to 81 (FM) contributes to the L-tryptophan binding site. 7 residues coordinate substrate: Arg102, Lys190, Arg264, Lys266, Tyr268, Tyr349, and Tyr418.

Belongs to the tryptophan dimethylallyltransferase family.

Its pathway is secondary metabolite biosynthesis. In terms of biological role, indole diterpene prenyltransferase; part of the gene cluster that mediates the biosynthesis of paxilline, a mycotoxin that acts as an inhibitor of mammalian maxi-K channels. PaxG, the geranylgeranyl diphosphate (GGPP) synthase is proposed to catalyze the first step in paxilline biosynthesis. Condensation of indole-3-glycerol phosphate with GGPP by paxC then forms 3-geranylgeranylindole (3-GGI), followed by epoxidation and cyclization of this intermediate (by paxM and paxB) to form paspaline. Paspaline is subsequently converted to 13-desoxypaxilline by paxP, the latter being then converted to paxilline by paxQ. Finally paxilline can be mono- and di-prenylated by paxD. The protein is Indole diterpene prenyltransferase paxD of Penicillium paxilli.